The chain runs to 181 residues: Cyclic phosphodiesterase (181 aa).

His-42 (proton donor/acceptor) is an active-site residue. Residue Thr-44 participates in substrate binding. Disulfide bonds link Cys-64–Cys-177 and Cys-104–Cys-110. The active-site Proton donor/acceptor is His-119. Residues Ser-121 and Tyr-124 each contribute to the substrate site.

It belongs to the 2H phosphoesterase superfamily. CPD1 family. As to expression, expressed in leaves, stems, roots, floral buds and germinating seeds.

It localises to the cytoplasm. It carries out the reaction ADP-alpha-D-ribose 1'',2''-cyclic phosphate + H2O = ADP-alpha-D-ribose 1''-phosphate + H(+). The enzyme catalyses 2',3'-cyclophospho-AMP + H2O = adenosine 2'-phosphate + H(+). It catalyses the reaction 2',3'-cyclophospho-GMP + H2O = guanosine 2'-phosphate + H(+). The catalysed reaction is 2',3'-cyclophospho-UMP + H2O = uridine 2'-phosphate + H(+). It carries out the reaction 2',3'-cyclophospho-CMP + H2O = cytidine 2'-phosphate + H(+). Inhibited by Cu(2+) and Zn(2+) at 0.5 mM by 93 and 87% respectively. Not inhibited by Ca(2+), Mg(2+), Co(2+), Ni(2+), and EDTA at 0.5 mM. In terms of biological role, hydrolyzes ADP-ribose 1'',2''-cyclic phosphate (Appr&gt;1) that is produced during tRNA splicing into ADP-ribose 1''-phosphate (Appr-1''p). Also acts on nucleoside 2',3'-cyclic phosphates. This is Cyclic phosphodiesterase from Arabidopsis thaliana (Mouse-ear cress).